A 386-amino-acid polypeptide reads, in one-letter code: Ribosomal RNA small subunit methyltransferase H (386 aa).

Residues 97–99 (GGH), Asp116, Tyr143, Asp167, and Gln174 contribute to the S-adenosyl-L-methionine site.

Belongs to the methyltransferase superfamily. RsmH family.

It localises to the cytoplasm. The catalysed reaction is cytidine(1402) in 16S rRNA + S-adenosyl-L-methionine = N(4)-methylcytidine(1402) in 16S rRNA + S-adenosyl-L-homocysteine + H(+). Specifically methylates the N4 position of cytidine in position 1402 (C1402) of 16S rRNA. The polypeptide is Ribosomal RNA small subunit methyltransferase H (Mycolicibacterium paratuberculosis (strain ATCC BAA-968 / K-10) (Mycobacterium paratuberculosis)).